The sequence spans 570 residues: MALGARGWRRRSLLLLLLWVTGQAAPVLGLAVSSELQIQQSFVPDECPRTVHSGDFVRYHYVGTFLDGQKFDSSYDRDSTFNVFVGKGQLIAGMDQALVGMCVNERRLVTIPPNLAYGSEGVSGVIPPNSVLHFDVLLVDIWNSEDQVHIQTYFKPPSCPRTIQVSDFVRYHYNGTFLDGTLFDSSHNRMKTYDTYVGIGWLIPGMDKGLLGMCVGEKRIITVPPFLAYGEEGDGKDIPGQASLVFDVALLDLHNPKDTISIENKVVPENCERRSQSGDFLRYHYNGTLLDGTLFDSSYSRNHTFDTYIGQGYVIPGMDEGLLGVCIGERRRIVVPPHLGYGEKGRGSIPGSAVLVFDIHVIDFHNPSDSISITSHYKPPDCSVLSKKGDYLKYHYNASLLDGTLLDSTWNLGKTYNIVLGSGQVVLGMDMGLREMCVGEKRTVIIPPHLGYGEAGVDGEVPGSAVLVFDIELLELVSGLPEGYMFIWNGEVSPNLFEEIDRDGNGEVLLEEFSEYIHAQVATGKGKLAPGFNAEMIVKNMFTNQDRNGDGKVTAEEFKLKDQEAKHDEL.

The N-terminal stretch at 1–24 is a signal peptide; it reads MALGARGWRRRSLLLLLLWVTGQA. PPIase FKBP-type domains are found at residues 54-142, 166-254, 278-365, and 389-477; these read GDFV…VDIW, SDFV…LDLH, GDFL…IDFH, and GDYL…LELV. 4 N-linked (GlcNAc...) asparagine glycosylation sites follow: N174, N286, N302, and N397. 2 EF-hand domains span residues 488–523 and 533–568; these read WNGE…QVAT and NAEM…AKHD. Ca(2+) is bound by residues D501, D503, N505, E507, E512, D546, N548, D550, K552, and E557. A Prevents secretion from ER motif is present at residues 567–570; that stretch reads HDEL.

Post-translationally, phosphorylated. As to expression, predominantly expressed in heart, skeletal muscle, lung, liver and kidney. Lower levels found in brain, spleen and testis.

Its subcellular location is the endoplasmic reticulum lumen. It carries out the reaction [protein]-peptidylproline (omega=180) = [protein]-peptidylproline (omega=0). Its activity is regulated as follows. Inhibited by FK506. Its function is as follows. PPIases accelerate the folding of proteins during protein synthesis. The chain is Peptidyl-prolyl cis-trans isomerase FKBP9 (Fkbp9) from Mus musculus (Mouse).